Consider the following 149-residue polypeptide: Probable flagellum biosynthesis repressor protein FlbT (149 aa).

The protein belongs to the FlbT family.

In terms of biological role, has a post-transcriptional repressor function in flagellum biogenesis. Associates with the 5'-UTR of fljK mRNA and promotes its degradation. The chain is Probable flagellum biosynthesis repressor protein FlbT from Rhizobium leguminosarum bv. trifolii (strain WSM2304).